The sequence spans 116 residues: Phosphoribosyl-AMP cyclohydrolase (116 aa).

Asp-81 lines the Mg(2+) pocket. A Zn(2+)-binding site is contributed by Cys-82. Mg(2+)-binding residues include Asp-83 and Asp-85. Residues Cys-98 and Cys-105 each coordinate Zn(2+).

It belongs to the PRA-CH family. In terms of assembly, homodimer. It depends on Mg(2+) as a cofactor. Zn(2+) serves as cofactor.

The protein localises to the cytoplasm. The catalysed reaction is 1-(5-phospho-beta-D-ribosyl)-5'-AMP + H2O = 1-(5-phospho-beta-D-ribosyl)-5-[(5-phospho-beta-D-ribosylamino)methylideneamino]imidazole-4-carboxamide. It participates in amino-acid biosynthesis; L-histidine biosynthesis; L-histidine from 5-phospho-alpha-D-ribose 1-diphosphate: step 3/9. Catalyzes the hydrolysis of the adenine ring of phosphoribosyl-AMP. This chain is Phosphoribosyl-AMP cyclohydrolase, found in Mycolicibacterium vanbaalenii (strain DSM 7251 / JCM 13017 / BCRC 16820 / KCTC 9966 / NRRL B-24157 / PYR-1) (Mycobacterium vanbaalenii).